The sequence spans 150 residues: Avidin-related protein 2 (150 aa).

An N-terminal signal peptide occupies residues 1-24; that stretch reads MVHATSPLLLLLLLSLALVAPSLS. Positions 26–147 constitute an Avidin-like domain; the sequence is RKCSLTGEWD…GNNDFTRQHT (122 aa). A disulfide bridge connects residues cysteine 28 and cysteine 105. 5 residues coordinate biotin: asparagine 36, serine 40, tyrosine 57, threonine 59, and aspartate 63. Residues asparagine 67 and asparagine 93 are each glycosylated (N-linked (GlcNAc...) asparagine). The biotin site is built by serine 95, serine 99, and asparagine 140.

As to quaternary structure, homotetramer. Glycosylated.

It is found in the secreted. In terms of biological role, forms a strong non-covalent specific complex with biotin. The chain is Avidin-related protein 2 (AVR2) from Gallus gallus (Chicken).